The following is a 99-amino-acid chain: Nucleoid-associated protein SUB1611 (99 aa).

It belongs to the YbaB/EbfC family. Homodimer.

Its subcellular location is the cytoplasm. It is found in the nucleoid. Its function is as follows. Binds to DNA and alters its conformation. May be involved in regulation of gene expression, nucleoid organization and DNA protection. The polypeptide is Nucleoid-associated protein SUB1611 (Streptococcus uberis (strain ATCC BAA-854 / 0140J)).